An 876-amino-acid polypeptide reads, in one-letter code: Radial spoke head 10 homolog B (876 aa).

Basic and acidic residues-rich tracts occupy residues 1–16 (MVKEKKKADKKGDKSA) and 57–66 (PKRDSEHTYQ). The segment at 1–72 (MVKEKKKADK…HTYQSEDETQ (72 aa)) is disordered. 10 MORN repeats span residues 86–108 (YEGEKVRGLYEGEGFAVFQGGNT), 109–131 (YHGMFSEGLMHGQGTYIWADGLK), 132–154 (YEGDFVKNIPMNHGVYTWPDGST), 155–177 (YEGEVVNGMRNGFGMFKCGTQPV), 179–201 (YIGHWCHGKRHGKGSIYYNQEGT), 204–226 (YEGDWVYNIKKGWGIRCYKSGNI), 227–249 (YEGQWENNMRHGEGRMRWLTTNE), 251–273 (YTGHWEKGIQNGFGTHTWFLKRI), 284–306 (YIGAFVNGFRHGQGKFYYASGAM), and 307–329 (YEGEWVSNKKQGRGRITFKNGRV). 2 disordered regions span residues 360 to 386 (SQRSRQARGSSVSADREPETLRKLDGS) and 841 to 876 (EPPEVPAVQPLTPSPPKEDLVSMQTSKASPGKKKKK). Residues 373–386 (ADREPETLRKLDGS) are compositionally biased toward basic and acidic residues. A coiled-coil region spans residues 752–841 (EKYEKSKDEQ…FELDITVLKE (90 aa)).

Interacts with RSPH6A. Does not appear to be part of the axonemal radial spoke complexes 1 or 2.

It localises to the cytoplasm. It is found in the cytoskeleton. The protein resides in the cilium axoneme. The protein localises to the cell projection. Its subcellular location is the cilium. It localises to the flagellum. Functionally, may function as part of the axonemal radial spoke complex 3 (RS3). Radial spoke complexes are important for ciliary motility. The chain is Radial spoke head 10 homolog B (Rsph10b) from Rattus norvegicus (Rat).